The following is a 408-amino-acid chain: MLSRRTLDCCLVMLIVSTTFCQELHFYKEKADRSHENLKTAVNQFGIHLCRRLLNEGKNIIFSPFSLSTALSMAFVGARGNTAIEMRSGLGFREAGLAQEDVPDSFYQAFQLLKSDQSGDKFYVANTALVQNNYNILNSYKRILHRKFYSDIQPVDFVRNGLWVKEMVNKWVSNITHNKITSLIDKPLSPLTRLFLLNAVYFKGSWKTQFDRKRTTLSLFYNNNKVARRVEMMSLTNKFPYTYDSELKCQVLELPYDGDKTSMIFILPEWDVRLKHVENALSAQSVKQLINNLQDTEIVVTIPKFKLENSPQIKEYLQVMGMNEAFSFSADFSGMNGRRNLFVKDVLHKAMIDVNEEGSEAAAVSGVVVMLKSASHNLPTFVANHPFMFLIINKESGMILFLGSVREL.

Positions 1 to 22 (MLSRRTLDCCLVMLIVSTTFCQ) are cleaved as a signal peptide. A disulfide bridge connects residues C50 and C249. N174 carries N-linked (GlcNAc...) asparagine glycosylation.

This sequence belongs to the serpin family. Monomer. Forms a covalent heterodimer with clotting factor C chain B. Forms a covalent heterodimer with proclotting enzyme heavy chain. Specifically expressed in hemocytes (at protein level).

It localises to the secreted. In terms of biological role, serine protease inhibitor that inhibits proclotting enzyme and to a lesser extent clotting factor C and clotting factor G. The sequence is that of Intracellular coagulation inhibitor 2 from Tachypleus tridentatus (Japanese horseshoe crab).